Consider the following 189-residue polypeptide: Probable nicotinate-nucleotide adenylyltransferase (189 aa).

Belongs to the NadD family.

The catalysed reaction is nicotinate beta-D-ribonucleotide + ATP + H(+) = deamido-NAD(+) + diphosphate. It functions in the pathway cofactor biosynthesis; NAD(+) biosynthesis; deamido-NAD(+) from nicotinate D-ribonucleotide: step 1/1. Functionally, catalyzes the reversible adenylation of nicotinate mononucleotide (NaMN) to nicotinic acid adenine dinucleotide (NaAD). The protein is Probable nicotinate-nucleotide adenylyltransferase of Bacillus cereus (strain ATCC 10987 / NRS 248).